Reading from the N-terminus, the 442-residue chain is Envelope glycoprotein D (442 aa).

A signal peptide spans 1–19 (MPAVLLVLYVNPPPSVCIL). The Virion surface segment spans residues 20-405 (TQKLSLGLYN…NSTFVGISVG (386 aa)). 2 N-linked (GlcNAc...) asparagine; by host glycosylation sites follow: Asn-103 and Asn-111. Disulfide bonds link Cys-138/Cys-259, Cys-176/Cys-273, and Cys-188/Cys-197. The segment at 331–364 (PDNHPGFDSVESEITQNKTDPKPGQADPKPNQPF) is disordered. N-linked (GlcNAc...) asparagine; by host glycans are attached at residues Asn-347 and Asn-396. Residues 406-422 (LGIAGLVLVGVILYVCL) form a helical membrane-spanning segment. The Intravirion segment spans residues 423 to 442 (RRKKELKVCTERLDSPTLDL).

The protein belongs to the herpesviridae glycoprotein D family.

The protein resides in the virion membrane. Envelope glycoprotein that binds to host cell entry receptors, promoting the virus entry into host cells. May trigger fusion with host membrane, by recruiting the fusion machinery composed of gB and gH/gL. In Equine herpesvirus 1 (strain Kentucky A) (EHV-1), this protein is Envelope glycoprotein D (gD).